We begin with the raw amino-acid sequence, 363 residues long: UDP-3-O-acylglucosamine N-acyltransferase (363 aa).

His237 serves as the catalytic Proton acceptor. The interval 338–363 is disordered; that stretch reads EQNSTDRAPNAKMLEVGVDPETTCSS.

The protein belongs to the transferase hexapeptide repeat family. LpxD subfamily. In terms of assembly, homotrimer.

It carries out the reaction a UDP-3-O-[(3R)-3-hydroxyacyl]-alpha-D-glucosamine + a (3R)-hydroxyacyl-[ACP] = a UDP-2-N,3-O-bis[(3R)-3-hydroxyacyl]-alpha-D-glucosamine + holo-[ACP] + H(+). The protein operates within bacterial outer membrane biogenesis; LPS lipid A biosynthesis. Functionally, catalyzes the N-acylation of UDP-3-O-acylglucosamine using 3-hydroxyacyl-ACP as the acyl donor. Is involved in the biosynthesis of lipid A, a phosphorylated glycolipid that anchors the lipopolysaccharide to the outer membrane of the cell. This chain is UDP-3-O-acylglucosamine N-acyltransferase, found in Synechococcus sp. (strain JA-2-3B'a(2-13)) (Cyanobacteria bacterium Yellowstone B-Prime).